The following is a 48-amino-acid chain: Bacteriochlorophyll c-binding protein (48 aa).

His25 is an a bacteriochlorophyll c binding site.

This sequence belongs to the BChl C/E-binding protein family.

It localises to the chlorosome. The protein localises to the chlorosome envelope. Component of the photosynthetic apparatus. The light harvesting B740 complex binds bacteriochlorophyll c. The chain is Bacteriochlorophyll c-binding protein (csmA) from Chlorobaculum thiosulfatiphilum (Chlorobium limicola f.sp. thiosulfatophilum).